Here is a 248-residue protein sequence, read N- to C-terminus: MKKLLIIGNWKMNKTYDEARDFINAFSNAYALNGAKISENIEYGIAPSFTNMSLFNKELLEKTNINLVAQNINENRSGAFTGEISAQMLKSINAKYVIVGHSERRQNYRETNKIVNQKAKAAIENGLIPIICVGESLEEYEAGKTKAVIKKQIKQSLEALDLSKIVVAYEPIWAIGTGKVATAEVAQQICKFIRSITSKDLIIQYGGSVSPSNIENLMKQEDIDGALVGGASLEVDSFFELITFNALK.

A substrate-binding site is contributed by 9-11; the sequence is NWK. H101 functions as the Electrophile in the catalytic mechanism. E170 serves as the catalytic Proton acceptor. Substrate is bound by residues G176, S208, and 229-230; that span reads GG.

The protein belongs to the triosephosphate isomerase family. As to quaternary structure, homodimer.

The protein localises to the cytoplasm. It catalyses the reaction D-glyceraldehyde 3-phosphate = dihydroxyacetone phosphate. The protein operates within carbohydrate biosynthesis; gluconeogenesis. Its pathway is carbohydrate degradation; glycolysis; D-glyceraldehyde 3-phosphate from glycerone phosphate: step 1/1. In terms of biological role, involved in the gluconeogenesis. Catalyzes stereospecifically the conversion of dihydroxyacetone phosphate (DHAP) to D-glyceraldehyde-3-phosphate (G3P). The polypeptide is Triosephosphate isomerase (Mycoplasmopsis pulmonis (strain UAB CTIP) (Mycoplasma pulmonis)).